Consider the following 421-residue polypeptide: 3-isopropylmalate dehydratase large subunit (421 aa).

Cysteine 300, cysteine 360, and cysteine 363 together coordinate [4Fe-4S] cluster.

It belongs to the aconitase/IPM isomerase family. LeuC type 2 subfamily. As to quaternary structure, heterodimer of LeuC and LeuD. The cofactor is [4Fe-4S] cluster.

The enzyme catalyses (2R,3S)-3-isopropylmalate = (2S)-2-isopropylmalate. It participates in amino-acid biosynthesis; L-leucine biosynthesis; L-leucine from 3-methyl-2-oxobutanoate: step 2/4. In terms of biological role, catalyzes the isomerization between 2-isopropylmalate and 3-isopropylmalate, via the formation of 2-isopropylmaleate. The protein is 3-isopropylmalate dehydratase large subunit of Thermodesulfovibrio yellowstonii (strain ATCC 51303 / DSM 11347 / YP87).